The sequence spans 131 residues: Small ribosomal subunit protein uS12 (131 aa).

3-methylthioaspartic acid is present on Asp-89.

The protein belongs to the universal ribosomal protein uS12 family. In terms of assembly, part of the 30S ribosomal subunit. Contacts proteins S8 and S17. May interact with IF1 in the 30S initiation complex.

Functionally, with S4 and S5 plays an important role in translational accuracy. Its function is as follows. Interacts with and stabilizes bases of the 16S rRNA that are involved in tRNA selection in the A site and with the mRNA backbone. Located at the interface of the 30S and 50S subunits, it traverses the body of the 30S subunit contacting proteins on the other side and probably holding the rRNA structure together. The combined cluster of proteins S8, S12 and S17 appears to hold together the shoulder and platform of the 30S subunit. This Campylobacter concisus (strain 13826) protein is Small ribosomal subunit protein uS12.